A 346-amino-acid chain; its full sequence is MNLQEKIEDLRKRTLSDLLSVADEKTLNNLRTVMLGKKGELTEILKGMKDLTNEERPVIGALANAFRDEFGAKFEAKKVEIEQAVMNAALESETLDVTLPGKAQKKGSRHILTQTQEEIEEIFLGMGYEIVDGYEVETDHYNFERMNLPKDHPARDMQDTFYITNEVLLRTHTSPMQARTMDAHDFSKGGLRMIAPGRVYRRDTDDATHSHQFHQIEGLVVDKNITMADLKGTLDLVMKKMFGQDRELRWRPSYFPFTEPSVEVDISCFKCGGKGCNVCKHTGWIEILGAGMVHPNVLEMSGLDSSVYSGFAFGLGQERIAMLRYGINDIRGFYQGDVRFLEQFGK.

Glu259 serves as a coordination point for Mg(2+).

It belongs to the class-II aminoacyl-tRNA synthetase family. Phe-tRNA synthetase alpha subunit type 1 subfamily. As to quaternary structure, tetramer of two alpha and two beta subunits. It depends on Mg(2+) as a cofactor.

The protein localises to the cytoplasm. It catalyses the reaction tRNA(Phe) + L-phenylalanine + ATP = L-phenylalanyl-tRNA(Phe) + AMP + diphosphate + H(+). The sequence is that of Phenylalanine--tRNA ligase alpha subunit from Lactococcus lactis subsp. lactis (strain IL1403) (Streptococcus lactis).